A 105-amino-acid chain; its full sequence is Putative pterin-4-alpha-carbinolamine dehydratase (105 aa).

The protein belongs to the pterin-4-alpha-carbinolamine dehydratase family.

It carries out the reaction (4aS,6R)-4a-hydroxy-L-erythro-5,6,7,8-tetrahydrobiopterin = (6R)-L-erythro-6,7-dihydrobiopterin + H2O. In Sinorhizobium fredii (strain NBRC 101917 / NGR234), this protein is Putative pterin-4-alpha-carbinolamine dehydratase.